Consider the following 264-residue polypeptide: 14-3-3-like protein GF14-A (264 aa).

The tract at residues 245-264 is disordered; it reads DMQDDGGDEMRDATKPEDEH. Residues 252–264 are compositionally biased toward basic and acidic residues; it reads DEMRDATKPEDEH.

The protein belongs to the 14-3-3 family.

Is associated with a DNA binding complex that binds to the G box, a well-characterized cis-acting DNA regulatory element found in plant genes. In Oryza sativa subsp. japonica (Rice), this protein is 14-3-3-like protein GF14-A (GF14A).